Here is a 167-residue protein sequence, read N- to C-terminus: Beta-3 adrenergic receptor (167 aa).

The Extracellular portion of the chain corresponds to 1-25 (RVGADAEAQECHSNPRCCSFASNMP). A disulfide bridge links Cys-11 with Cys-17. A helical transmembrane segment spans residues 26 to 47 (YALLSSSVSFYLPLLVMLFVYA). The Cytoplasmic segment spans residues 48-114 (RVFVVAKRQR…LPLREHRALR (67 aa)). The disordered stretch occupies residues 66 to 97 (RFPPEESPRSPSRSPSPVAGGTGEAPDGVPSC). A helical transmembrane segment spans residues 115 to 136 (TLGLIMGIFSLCWLPFFLANVL). At 137-148 (RALAGPSIVPNG) the chain is on the extracellular side. Residues 149–167 (VFIALNWLGYANSAFNPLI) traverse the membrane as a helical segment.

The protein belongs to the G-protein coupled receptor 1 family. Adrenergic receptor subfamily. ADRB3 sub-subfamily. As to quaternary structure, interacts with ARRDC3.

It localises to the cell membrane. Functionally, beta-adrenergic receptors mediate the catecholamine-induced activation of adenylate cyclase through the action of G proteins. Beta-3 is involved in the regulation of lipolysis and thermogenesis. In Meriones unguiculatus (Mongolian jird), this protein is Beta-3 adrenergic receptor (ADRB3).